Consider the following 329-residue polypeptide: Delta-aminolevulinic acid dehydratase (329 aa).

The active-site Schiff-base intermediate with substrate is the lysine 202. Residues arginine 212 and arginine 223 each contribute to the 5-aminolevulinate site. Glutamate 239 provides a ligand contact to Mg(2+). Lysine 254 (schiff-base intermediate with substrate) is an active-site residue. Positions 280 and 319 each coordinate 5-aminolevulinate.

Belongs to the ALAD family. In terms of assembly, homooctamer.

It catalyses the reaction 2 5-aminolevulinate = porphobilinogen + 2 H2O + H(+). It participates in porphyrin-containing compound metabolism; protoporphyrin-IX biosynthesis; coproporphyrinogen-III from 5-aminolevulinate: step 1/4. Catalyzes an early step in the biosynthesis of tetrapyrroles. Binds two molecules of 5-aminolevulinate per subunit, each at a distinct site, and catalyzes their condensation to form porphobilinogen. The polypeptide is Delta-aminolevulinic acid dehydratase (hemB) (Mycobacterium tuberculosis (strain CDC 1551 / Oshkosh)).